The sequence spans 880 residues: Alanine--tRNA ligase (880 aa).

The interval 414–443 (TVDESEFESEMEKQRNRARKARSGGDTEGW) is disordered. Residues His-566, His-570, Cys-668, and His-672 each coordinate Zn(2+).

This sequence belongs to the class-II aminoacyl-tRNA synthetase family. It depends on Zn(2+) as a cofactor.

The protein resides in the cytoplasm. The enzyme catalyses tRNA(Ala) + L-alanine + ATP = L-alanyl-tRNA(Ala) + AMP + diphosphate. Its function is as follows. Catalyzes the attachment of alanine to tRNA(Ala) in a two-step reaction: alanine is first activated by ATP to form Ala-AMP and then transferred to the acceptor end of tRNA(Ala). Also edits incorrectly charged Ser-tRNA(Ala) and Gly-tRNA(Ala) via its editing domain. The polypeptide is Alanine--tRNA ligase (Alkaliphilus metalliredigens (strain QYMF)).